A 137-amino-acid chain; its full sequence is Crustacean hyperglycemic hormones (137 aa).

A signal peptide spans M1 to G28. Position 64 is a pyrrolidone carboxylic acid (Q64). F66 carries the D-phenylalanine; in form CHH-II modification. 3 disulfide bridges follow: C70–C106, C86–C102, and C89–C115. A Valine amide modification is found at V135.

Belongs to the arthropod CHH/MIH/GIH/VIH hormone family. In terms of tissue distribution, produced by the medulla terminalis X-organ in the eyestalks and transported to the sinus gland where they are stored and released.

It is found in the secreted. In terms of biological role, hormone found in the sinus gland of isopods and decapods which controls the blood sugar level. Has a secretagogue action over the amylase released from the midgut gland. May act as a stress hormone and may be involved in the control of molting and reproduction. The protein is Crustacean hyperglycemic hormones of Procambarus clarkii (Red swamp crayfish).